A 249-amino-acid chain; its full sequence is 2,3-bisphosphoglycerate-dependent phosphoglycerate mutase (249 aa).

Residues 10–17 (RHGESEWN), 23–24 (TG), arginine 62, 89–92 (ERHY), lysine 100, 116–117 (RR), and 185–186 (GN) contribute to the substrate site. Histidine 11 serves as the catalytic Tele-phosphohistidine intermediate. Residue glutamate 89 is the Proton donor/acceptor of the active site.

The protein belongs to the phosphoglycerate mutase family. BPG-dependent PGAM subfamily. As to quaternary structure, homodimer.

It catalyses the reaction (2R)-2-phosphoglycerate = (2R)-3-phosphoglycerate. It participates in carbohydrate degradation; glycolysis; pyruvate from D-glyceraldehyde 3-phosphate: step 3/5. Its function is as follows. Catalyzes the interconversion of 2-phosphoglycerate and 3-phosphoglycerate. The chain is 2,3-bisphosphoglycerate-dependent phosphoglycerate mutase from Hamiltonella defensa subsp. Acyrthosiphon pisum (strain 5AT).